The sequence spans 151 residues: Deoxyuridine 5'-triphosphate nucleotidohydrolase (151 aa).

Residues 70–72, N83, 87–89, and M97 contribute to the substrate site; these read RSG and LID.

Belongs to the dUTPase family. The cofactor is Mg(2+).

It catalyses the reaction dUTP + H2O = dUMP + diphosphate + H(+). The protein operates within pyrimidine metabolism; dUMP biosynthesis; dUMP from dCTP (dUTP route): step 2/2. Its function is as follows. This enzyme is involved in nucleotide metabolism: it produces dUMP, the immediate precursor of thymidine nucleotides and it decreases the intracellular concentration of dUTP so that uracil cannot be incorporated into DNA. The chain is Deoxyuridine 5'-triphosphate nucleotidohydrolase from Pseudomonas putida (strain ATCC 47054 / DSM 6125 / CFBP 8728 / NCIMB 11950 / KT2440).